A 380-amino-acid polypeptide reads, in one-letter code: Shaggy-related protein kinase eta (380 aa).

The region spanning 40–324 is the Protein kinase domain; sequence YMAERVVGTG…ALEACAHPFF (285 aa). ATP contacts are provided by residues 46–54 and K69; that span reads VGTGSFGIV. The residue at position 104 (T104) is a Phosphothreonine. Residue S105 is modified to Phosphoserine. The active-site Proton acceptor is D165. S187 carries the post-translational modification Phosphoserine. Phosphotyrosine is present on Y200. A phosphothreonine mark is found at T220 and T261. S310 carries the post-translational modification Phosphoserine. Residue T314 is modified to Phosphothreonine. S353 is subject to Phosphoserine.

This sequence belongs to the protein kinase superfamily. CMGC Ser/Thr protein kinase family. GSK-3 subfamily. Interacts in vitro with the C-terminal fragment of BZR1 and with BES1/BZR2, but not through the kinase domain. Interacts with BHLH150, beet curly top virus AL4/C4 and tomato golden mosaic virus AL4/AC4. Interacts with YDA. Interacts with MKK4. Interacts with KIB1 and KIB2 in a brassinosteroid (BR)-dependent manner. Interacts with BSK1, BSK6, BSK8 and BSK11. Binds to WRKY46, WRKY54 and WRKY70. Component of a complex made of POLAR, BASL, ASK7/BIN2 and ASK3/SK12. Binds to POLAR and BASL. In terms of processing, autophosphorylated mainly on threonine and serine residues. Post-translationally, ubiquitination and subsequent proteasomal degradation mediated by KIB1. In terms of tissue distribution, in the two outer cell layers of the developing seed coat and restricted to the suspensor cells in developing embryos. Mostly expressed in stomatal lineage cells with asymmetric cell division (ACD) potential. Observed in small cells of non-protruding hypocotyl cell files and of developing cotyledon epidermis.

It localises to the cytoplasm. It is found in the cell cortex. The protein resides in the nucleus. Its subcellular location is the cell membrane. It carries out the reaction L-seryl-[protein] + ATP = O-phospho-L-seryl-[protein] + ADP + H(+). The enzyme catalyses L-threonyl-[protein] + ATP = O-phospho-L-threonyl-[protein] + ADP + H(+). Its activity is regulated as follows. Inactivated by an unknown mechanism after binding of brassinosteroids to the brassinosteroid receptor complex. Inhibited by lithium. Inhibited by dephosphorylation at Tyr-200 by BSU1. Competitive inhibition by KIB1 that reduces substrate (e.g. BZR1) access. Repressed by bikinin. Functionally, negative regulator in brassinosteroid signal transduction pathway important for plant growth. May be also involved in auxin signaling pathway. Phosphorylates and increases the degradation of BZR1 and BZR2/BES1 by the proteasome. Phosphorylates BHLH150, beet curly top virus C4 and tomato golden mosaic virus AC4 on threonine and serine residues. Upon brassinosteroid signaling, inhibits stomatal development by phosphorylating and inhibiting the MAPKK kinase YDA and the MAPK kinases MKK4 and MKK5. Phosphorylates BSK1, BSK3, BSK5, BSK6, BSK8 and BSK11 in vitro. Phoyphorylates and destabilizes WRKY46, WRKY54 and WRKY70. Mediates BASL nuclear exclusion; kinase activity is required for this function. Required first at the cortical polarity site, to restrict MAPK signaling and promote asymmetric cell division (ACD), and second in the nucleus of stomatal lineage ground cells (SLGCs) or meristemoids, to limit cell division and to promote differentiation into pavement or stomatal guard cells, respectively, likely by initiating BASL polarization. Phosphorylates BASL, YDA and SPCH in vitro and POLAR in vivo. Phosphorylates and inhibits SPCH in the nucleus of SLGC undergoing ACD, thus negatively regulating stomatal development. In Arabidopsis thaliana (Mouse-ear cress), this protein is Shaggy-related protein kinase eta.